A 100-amino-acid polypeptide reads, in one-letter code: Aspartyl/glutamyl-tRNA(Asn/Gln) amidotransferase subunit C (100 aa).

The protein belongs to the GatC family. Heterotrimer of A, B and C subunits.

The enzyme catalyses L-glutamyl-tRNA(Gln) + L-glutamine + ATP + H2O = L-glutaminyl-tRNA(Gln) + L-glutamate + ADP + phosphate + H(+). It carries out the reaction L-aspartyl-tRNA(Asn) + L-glutamine + ATP + H2O = L-asparaginyl-tRNA(Asn) + L-glutamate + ADP + phosphate + 2 H(+). Allows the formation of correctly charged Asn-tRNA(Asn) or Gln-tRNA(Gln) through the transamidation of misacylated Asp-tRNA(Asn) or Glu-tRNA(Gln) in organisms which lack either or both of asparaginyl-tRNA or glutaminyl-tRNA synthetases. The reaction takes place in the presence of glutamine and ATP through an activated phospho-Asp-tRNA(Asn) or phospho-Glu-tRNA(Gln). The polypeptide is Aspartyl/glutamyl-tRNA(Asn/Gln) amidotransferase subunit C (Rickettsia bellii (strain RML369-C)).